The following is a 357-amino-acid chain: Membrane-bound lytic murein transglycosylase C (357 aa).

The N-terminal stretch at 1-15 (MKKYLLLALLPFLYA) is a signal peptide. Cys-16 carries N-palmitoyl cysteine lipidation. The S-diacylglycerol cysteine moiety is linked to residue Cys-16.

Belongs to the transglycosylase Slt family.

It is found in the cell outer membrane. The enzyme catalyses Exolytic cleavage of the (1-&gt;4)-beta-glycosidic linkage between N-acetylmuramic acid (MurNAc) and N-acetylglucosamine (GlcNAc) residues in peptidoglycan, from either the reducing or the non-reducing ends of the peptidoglycan chains, with concomitant formation of a 1,6-anhydrobond in the MurNAc residue.. Functionally, murein-degrading enzyme. May play a role in recycling of muropeptides during cell elongation and/or cell division. The sequence is that of Membrane-bound lytic murein transglycosylase C from Haemophilus influenzae (strain PittEE).